The following is a 196-amino-acid chain: MADS-box transcription factor 32 (196 aa).

The region spanning 1–61 is the MADS-box domain; sequence MGRGRSEIKR…GKLYHFLSPT (61 aa). The K-box domain occupies 85-175; sequence RQERRAELEK…CDKIAHAQTL (91 aa).

Its subcellular location is the nucleus. Its function is as follows. Probable transcription factor. In Oryza sativa subsp. japonica (Rice), this protein is MADS-box transcription factor 32 (MADS32).